The following is a 464-amino-acid chain: Asparagine--tRNA ligase (464 aa).

This sequence belongs to the class-II aminoacyl-tRNA synthetase family. In terms of assembly, homodimer.

Its subcellular location is the cytoplasm. It carries out the reaction tRNA(Asn) + L-asparagine + ATP = L-asparaginyl-tRNA(Asn) + AMP + diphosphate + H(+). The sequence is that of Asparagine--tRNA ligase from Acetivibrio thermocellus (strain ATCC 27405 / DSM 1237 / JCM 9322 / NBRC 103400 / NCIMB 10682 / NRRL B-4536 / VPI 7372) (Clostridium thermocellum).